The primary structure comprises 205 residues: Dephospho-CoA kinase (205 aa).

One can recognise a DPCK domain in the interval 7–205; sequence IIGVTGRIAS…QGIINYERFE (199 aa). Position 15–20 (15–20) interacts with ATP; sequence ASGKDT.

The protein belongs to the CoaE family.

The protein resides in the cytoplasm. The catalysed reaction is 3'-dephospho-CoA + ATP = ADP + CoA + H(+). Its pathway is cofactor biosynthesis; coenzyme A biosynthesis; CoA from (R)-pantothenate: step 5/5. Its function is as follows. Catalyzes the phosphorylation of the 3'-hydroxyl group of dephosphocoenzyme A to form coenzyme A. This chain is Dephospho-CoA kinase, found in Borreliella burgdorferi (strain ATCC 35210 / DSM 4680 / CIP 102532 / B31) (Borrelia burgdorferi).